The chain runs to 328 residues: dTDP-4-dehydrorhamnose 3,5-epimerase (328 aa).

Substrate contacts are provided by residues Arg23, Glu28, 46-48 (QEN), and Arg58. His61 acts as the Proton acceptor in catalysis. 2 residues coordinate substrate: Lys70 and His117. Catalysis depends on Tyr130, which acts as the Proton donor. The substrate site is built by Glu141 and Lys166.

This sequence belongs to the dTDP-4-dehydrorhamnose 3,5-epimerase family. As to quaternary structure, homodimer.

The catalysed reaction is dTDP-4-dehydro-6-deoxy-alpha-D-glucose = dTDP-4-dehydro-beta-L-rhamnose. It participates in carbohydrate biosynthesis; dTDP-L-rhamnose biosynthesis. It functions in the pathway bacterial outer membrane biogenesis; LPS O-antigen biosynthesis. Functionally, catalyzes the epimerization of the C3' and C5'positions of dTDP-6-deoxy-D-xylo-4-hexulose, forming dTDP-6-deoxy-L-lyxo-4-hexulose. The chain is dTDP-4-dehydrorhamnose 3,5-epimerase (rfbC) from Neisseria gonorrhoeae.